A 1341-amino-acid chain; its full sequence is DNA-directed RNA polymerase subunit beta (1341 aa).

Belongs to the RNA polymerase beta chain family. As to quaternary structure, the RNAP catalytic core consists of 2 alpha, 1 beta, 1 beta' and 1 omega subunit. When a sigma factor is associated with the core the holoenzyme is formed, which can initiate transcription.

The enzyme catalyses RNA(n) + a ribonucleoside 5'-triphosphate = RNA(n+1) + diphosphate. DNA-dependent RNA polymerase catalyzes the transcription of DNA into RNA using the four ribonucleoside triphosphates as substrates. This chain is DNA-directed RNA polymerase subunit beta, found in Photobacterium profundum (strain SS9).